The chain runs to 109 residues: Parvalbumin beta (109 aa).

EF-hand domains lie at 38-73 (KSKD…FDGK) and 77-109 (LTDK…VTKG). Ca(2+) contacts are provided by Asp51, Asp53, Ser55, Tyr57, Glu59, Glu62, Asp90, Asp92, Asp94, Lys96, and Glu101.

It belongs to the parvalbumin family.

In terms of biological role, in muscle, parvalbumin is thought to be involved in relaxation after contraction. It binds two calcium ions. The protein is Parvalbumin beta of Boa constrictor (Boa).